We begin with the raw amino-acid sequence, 84 residues long: Large ribosomal subunit protein bL31B (84 aa).

Belongs to the bacterial ribosomal protein bL31 family. Type B subfamily. As to quaternary structure, part of the 50S ribosomal subunit.

This chain is Large ribosomal subunit protein bL31B, found in Rhodococcus erythropolis (strain PR4 / NBRC 100887).